Reading from the N-terminus, the 373-residue chain is 3 beta-hydroxysteroid dehydrogenase/Delta 5--&gt;4-isomerase type 2 (373 aa).

Tyr155 acts as the Proton acceptor in catalysis. Lys159 lines the NAD(+) pocket. A helical membrane pass occupies residues 288-308; that stretch reads VALLYWLGFLLELVNFLLRPV.

Belongs to the 3-beta-HSD family. In terms of tissue distribution, high levels in adrenal gland, kidney and male liver. Low levels in female liver.

Its subcellular location is the endoplasmic reticulum membrane. The protein localises to the mitochondrion membrane. It catalyses the reaction a 3beta-hydroxy-Delta(5)-steroid + NAD(+) = a 3-oxo-Delta(5)-steroid + NADH + H(+). The enzyme catalyses a 3-oxo-Delta(5)-steroid = a 3-oxo-Delta(4)-steroid. It carries out the reaction pregnenolone + NAD(+) = pregn-5-ene-3,20-dione + NADH + H(+). The catalysed reaction is pregn-5-ene-3,20-dione = progesterone. It catalyses the reaction 3beta-hydroxyandrost-5-en-17-one + NAD(+) = androst-5-ene-3,17-dione + NADH + H(+). The enzyme catalyses androst-5-ene-3,17-dione = androst-4-ene-3,17-dione. Its pathway is lipid metabolism; steroid biosynthesis. 3-beta-HSD is a bifunctional enzyme, that catalyzes the oxidative conversion of Delta(5)-ene-3-beta-hydroxy steroid, and the oxidative conversion of ketosteroids. The 3-beta-HSD enzymatic system plays a crucial role in the biosynthesis of all classes of hormonal steroids. This is 3 beta-hydroxysteroid dehydrogenase/Delta 5--&gt;4-isomerase type 2 (HSD3B2) from Mesocricetus auratus (Golden hamster).